Consider the following 83-residue polypeptide: uncharacterized protein (83 aa).

Transmembrane regions (helical) follow at residues 23-43 (GGCYFAFMGVAWVLLAISAIA) and 49-69 (SLWWDIWSLGLLVLIPAVVYG).

Its subcellular location is the cell membrane. This is an uncharacterized protein from Mycobacterium tuberculosis (strain CDC 1551 / Oshkosh).